Reading from the N-terminus, the 243-residue chain is 5'-methylthioadenosine/S-adenosylhomocysteine nucleosidase (243 aa).

Glu-12 functions as the Proton acceptor in the catalytic mechanism. Substrate-binding positions include Gly-78, Met-158, and Met-179 to Glu-180. The Proton donor role is filled by Asp-203.

It belongs to the PNP/UDP phosphorylase family. MtnN subfamily.

It catalyses the reaction S-adenosyl-L-homocysteine + H2O = S-(5-deoxy-D-ribos-5-yl)-L-homocysteine + adenine. The catalysed reaction is S-methyl-5'-thioadenosine + H2O = 5-(methylsulfanyl)-D-ribose + adenine. The enzyme catalyses 5'-deoxyadenosine + H2O = 5-deoxy-D-ribose + adenine. The protein operates within amino-acid biosynthesis; L-methionine biosynthesis via salvage pathway; S-methyl-5-thio-alpha-D-ribose 1-phosphate from S-methyl-5'-thioadenosine (hydrolase route): step 1/2. Its function is as follows. Catalyzes the irreversible cleavage of the glycosidic bond in both 5'-methylthioadenosine (MTA) and S-adenosylhomocysteine (SAH/AdoHcy) to adenine and the corresponding thioribose, 5'-methylthioribose and S-ribosylhomocysteine, respectively. Also cleaves 5'-deoxyadenosine, a toxic by-product of radical S-adenosylmethionine (SAM) enzymes, into 5-deoxyribose and adenine. The polypeptide is 5'-methylthioadenosine/S-adenosylhomocysteine nucleosidase (Colwellia psychrerythraea (strain 34H / ATCC BAA-681) (Vibrio psychroerythus)).